Reading from the N-terminus, the 306-residue chain is Probable rRNA-processing protein EBP2 (306 aa).

An N-acetylmethionine modification is found at Met-1. Disordered regions lie at residues 1 to 20 and 77 to 99; these read MDTPPLSDSESESDESLVTD and VPEIGGSEAPAPQNKDQKAVDPE. Thr-3 carries the phosphothreonine modification. Phosphoserine is present on residues Ser-7, Ser-9, Ser-11, Ser-13, and Ser-16. Lys-94 participates in a covalent cross-link: Glycyl lysine isopeptide (Lys-Gly) (interchain with G-Cter in SUMO2). Positions 138–169 form a coiled coil; that stretch reads AEMAKSDLQMQKIRQKLQTKQAAMERSEKAKQ. Residues Lys-179 and Lys-218 each participate in a glycyl lysine isopeptide (Lys-Gly) (interchain with G-Cter in SUMO2) cross-link. Residues 213-306 form a disordered region; the sequence is LEGDQKPLAQ…TREKMKNRTH (94 aa). Phosphoserine is present on residues Ser-264 and Ser-270. A compositionally biased stretch (basic residues) spans 274 to 306; the sequence is KTAHGRGLKRPGKKGSNKRPGKRTREKMKNRTH.

This sequence belongs to the EBP2 family. Specifically interacts with EBV EBNA1. The EBNA1-EBP2 interaction is important for the stable segregation of EBV episomes during cell division. Interacts with WDR46. As to expression, ubiquitous.

The protein resides in the nucleus. It is found in the nucleolus. In terms of biological role, required for the processing of the 27S pre-rRNA. In Homo sapiens (Human), this protein is Probable rRNA-processing protein EBP2 (EBNA1BP2).